The sequence spans 336 residues: Phosphoribosylformylglycinamidine cyclo-ligase (336 aa).

This sequence belongs to the AIR synthase family.

Its subcellular location is the cytoplasm. The enzyme catalyses 2-formamido-N(1)-(5-O-phospho-beta-D-ribosyl)acetamidine + ATP = 5-amino-1-(5-phospho-beta-D-ribosyl)imidazole + ADP + phosphate + H(+). It participates in purine metabolism; IMP biosynthesis via de novo pathway; 5-amino-1-(5-phospho-D-ribosyl)imidazole from N(2)-formyl-N(1)-(5-phospho-D-ribosyl)glycinamide: step 2/2. In Caldanaerobacter subterraneus subsp. tengcongensis (strain DSM 15242 / JCM 11007 / NBRC 100824 / MB4) (Thermoanaerobacter tengcongensis), this protein is Phosphoribosylformylglycinamidine cyclo-ligase.